The sequence spans 358 residues: Histidinol-phosphate aminotransferase (358 aa).

Lys218 carries the N6-(pyridoxal phosphate)lysine modification.

It belongs to the class-II pyridoxal-phosphate-dependent aminotransferase family. Histidinol-phosphate aminotransferase subfamily. As to quaternary structure, homodimer. Requires pyridoxal 5'-phosphate as cofactor.

The catalysed reaction is L-histidinol phosphate + 2-oxoglutarate = 3-(imidazol-4-yl)-2-oxopropyl phosphate + L-glutamate. Its pathway is amino-acid biosynthesis; L-histidine biosynthesis; L-histidine from 5-phospho-alpha-D-ribose 1-diphosphate: step 7/9. This Dehalococcoides mccartyi (strain CBDB1) protein is Histidinol-phosphate aminotransferase.